We begin with the raw amino-acid sequence, 175 residues long: Co-chaperone protein HscB homolog (175 aa).

One can recognise a J domain in the interval 7–79; that stretch reads SHFDLFDLPA…LKRATYLLHL (73 aa).

Belongs to the HscB family. As to quaternary structure, interacts with HscA and stimulates its ATPase activity.

In terms of biological role, co-chaperone involved in the maturation of iron-sulfur cluster-containing proteins. Seems to help targeting proteins to be folded toward HscA. The protein is Co-chaperone protein HscB homolog of Paraburkholderia xenovorans (strain LB400).